The chain runs to 202 residues: Dephospho-CoA kinase (202 aa).

The DPCK domain occupies 4-200; sequence VVGVTGGIGS…QRYLAATVAQ (197 aa). 12 to 17 contacts ATP; that stretch reads GSGKSA.

Belongs to the CoaE family.

Its subcellular location is the cytoplasm. The enzyme catalyses 3'-dephospho-CoA + ATP = ADP + CoA + H(+). Its pathway is cofactor biosynthesis; coenzyme A biosynthesis; CoA from (R)-pantothenate: step 5/5. Functionally, catalyzes the phosphorylation of the 3'-hydroxyl group of dephosphocoenzyme A to form coenzyme A. This Idiomarina loihiensis (strain ATCC BAA-735 / DSM 15497 / L2-TR) protein is Dephospho-CoA kinase.